A 163-amino-acid polypeptide reads, in one-letter code: 2-C-methyl-D-erythritol 2,4-cyclodiphosphate synthase (163 aa).

The a divalent metal cation site is built by Asp-12 and His-14. Residues 12–14 (DVH) and 38–39 (HS) contribute to the 4-CDP-2-C-methyl-D-erythritol 2-phosphate site. Residue His-46 participates in a divalent metal cation binding. 4-CDP-2-C-methyl-D-erythritol 2-phosphate is bound by residues 60 to 62 (DIG), 136 to 139 (TTSE), Phe-143, and Arg-146.

It belongs to the IspF family. As to quaternary structure, homotrimer. A divalent metal cation is required as a cofactor.

The catalysed reaction is 4-CDP-2-C-methyl-D-erythritol 2-phosphate = 2-C-methyl-D-erythritol 2,4-cyclic diphosphate + CMP. The protein operates within isoprenoid biosynthesis; isopentenyl diphosphate biosynthesis via DXP pathway; isopentenyl diphosphate from 1-deoxy-D-xylulose 5-phosphate: step 4/6. Involved in the biosynthesis of isopentenyl diphosphate (IPP) and dimethylallyl diphosphate (DMAPP), two major building blocks of isoprenoid compounds. Catalyzes the conversion of 4-diphosphocytidyl-2-C-methyl-D-erythritol 2-phosphate (CDP-ME2P) to 2-C-methyl-D-erythritol 2,4-cyclodiphosphate (ME-CPP) with a corresponding release of cytidine 5-monophosphate (CMP). This chain is 2-C-methyl-D-erythritol 2,4-cyclodiphosphate synthase, found in Xanthomonas campestris pv. campestris (strain 8004).